Here is a 111-residue protein sequence, read N- to C-terminus: Large ribosomal subunit protein uL22 (111 aa).

This sequence belongs to the universal ribosomal protein uL22 family. As to quaternary structure, part of the 50S ribosomal subunit.

In terms of biological role, this protein binds specifically to 23S rRNA; its binding is stimulated by other ribosomal proteins, e.g. L4, L17, and L20. It is important during the early stages of 50S assembly. It makes multiple contacts with different domains of the 23S rRNA in the assembled 50S subunit and ribosome. The globular domain of the protein is located near the polypeptide exit tunnel on the outside of the subunit, while an extended beta-hairpin is found that lines the wall of the exit tunnel in the center of the 70S ribosome. This Alkalilimnicola ehrlichii (strain ATCC BAA-1101 / DSM 17681 / MLHE-1) protein is Large ribosomal subunit protein uL22.